Consider the following 137-residue polypeptide: Ribonuclease P protein component (137 aa).

The protein belongs to the RnpA family. In terms of assembly, consists of a catalytic RNA component (M1 or rnpB) and a protein subunit.

It carries out the reaction Endonucleolytic cleavage of RNA, removing 5'-extranucleotides from tRNA precursor.. Its function is as follows. RNaseP catalyzes the removal of the 5'-leader sequence from pre-tRNA to produce the mature 5'-terminus. It can also cleave other RNA substrates such as 4.5S RNA. The protein component plays an auxiliary but essential role in vivo by binding to the 5'-leader sequence and broadening the substrate specificity of the ribozyme. The protein is Ribonuclease P protein component of Porphyromonas gingivalis (strain ATCC BAA-308 / W83).